Reading from the N-terminus, the 505-residue chain is Histidine ammonia-lyase (505 aa).

Positions Ala-141 to Gly-143 form a cross-link, 5-imidazolinone (Ala-Gly). Ser-142 carries the post-translational modification 2,3-didehydroalanine (Ser).

This sequence belongs to the PAL/histidase family. Post-translationally, contains an active site 4-methylidene-imidazol-5-one (MIO), which is formed autocatalytically by cyclization and dehydration of residues Ala-Ser-Gly.

It is found in the cytoplasm. The enzyme catalyses L-histidine = trans-urocanate + NH4(+). Its pathway is amino-acid degradation; L-histidine degradation into L-glutamate; N-formimidoyl-L-glutamate from L-histidine: step 1/3. This chain is Histidine ammonia-lyase, found in Bacillus cereus (strain G9842).